The chain runs to 822 residues: Molybdenum cofactor sulfurase (822 aa).

Position 245 is an N6-(pyridoxal phosphate)lysine (K245). The active site involves C412. The MOSC domain occupies 658–814 (LRLIRQSSND…LKTYSPIKAI (157 aa)).

It belongs to the class-V pyridoxal-phosphate-dependent aminotransferase family. MOCOS subfamily. Requires pyridoxal 5'-phosphate as cofactor.

The enzyme catalyses Mo-molybdopterin + L-cysteine + AH2 = thio-Mo-molybdopterin + L-alanine + A + H2O. It participates in cofactor biosynthesis; molybdopterin biosynthesis. In terms of biological role, sulfurates the molybdenum cofactor. Sulfation of molybdenum is essential for xanthine dehydrogenase (XDH) and aldehyde oxidase (ADO) enzymes in which molybdenum cofactor is liganded by 1 oxygen and 1 sulfur atom in active form. The chain is Molybdenum cofactor sulfurase from Bombyx mori (Silk moth).